We begin with the raw amino-acid sequence, 591 residues long: L-fucose isomerase (591 aa).

Catalysis depends on proton acceptor residues Glu-337 and Asp-361. Mn(2+) is bound by residues Glu-337, Asp-361, and His-528.

The protein belongs to the L-fucose isomerase family. Homohexamer. Mn(2+) is required as a cofactor.

It is found in the cytoplasm. It catalyses the reaction L-fucose = L-fuculose. Its pathway is carbohydrate degradation; L-fucose degradation; L-lactaldehyde and glycerone phosphate from L-fucose: step 1/3. Functionally, converts the aldose L-fucose into the corresponding ketose L-fuculose. This is L-fucose isomerase from Salmonella arizonae (strain ATCC BAA-731 / CDC346-86 / RSK2980).